We begin with the raw amino-acid sequence, 138 residues long: Cysteine desulfuration protein SufE (138 aa).

The active-site Cysteine persulfide intermediate is the Cys-51.

Belongs to the SufE family. Homodimer. Interacts with SufS.

The protein localises to the cytoplasm. Its pathway is cofactor biosynthesis; iron-sulfur cluster biosynthesis. Functionally, participates in cysteine desulfuration mediated by SufS. Cysteine desulfuration mobilizes sulfur from L-cysteine to yield L-alanine and constitutes an essential step in sulfur metabolism for biosynthesis of a variety of sulfur-containing biomolecules. Functions as a sulfur acceptor for SufS, by mediating the direct transfer of the sulfur atom from the S-sulfanylcysteine of SufS, an intermediate product of cysteine desulfuration process. The sequence is that of Cysteine desulfuration protein SufE from Klebsiella pneumoniae (strain 342).